The primary structure comprises 452 residues: Ribosomal protein uS12 methylthiotransferase RimO (452 aa).

Positions 3-122 (LTVGLISLGC…LPEIITQVMD (120 aa)) constitute an MTTase N-terminal domain. The [4Fe-4S] cluster site is built by cysteine 12, cysteine 48, cysteine 85, cysteine 162, cysteine 166, and cysteine 169. In terms of domain architecture, Radical SAM core spans 148–392 (LTPPHTAYIK…TLLLARLASE (245 aa)). The TRAM domain maps to 395–452 (QEQIGRQIRVLVDAPGVARTEWDAPDIDGTVSVPLTLPVGQFATVTVTDAVAYELTAE).

The protein belongs to the methylthiotransferase family. RimO subfamily. Requires [4Fe-4S] cluster as cofactor.

The protein localises to the cytoplasm. The enzyme catalyses L-aspartate(89)-[ribosomal protein uS12]-hydrogen + (sulfur carrier)-SH + AH2 + 2 S-adenosyl-L-methionine = 3-methylsulfanyl-L-aspartate(89)-[ribosomal protein uS12]-hydrogen + (sulfur carrier)-H + 5'-deoxyadenosine + L-methionine + A + S-adenosyl-L-homocysteine + 2 H(+). Its function is as follows. Catalyzes the methylthiolation of an aspartic acid residue of ribosomal protein uS12. This chain is Ribosomal protein uS12 methylthiotransferase RimO, found in Akkermansia muciniphila (strain ATCC BAA-835 / DSM 22959 / JCM 33894 / BCRC 81048 / CCUG 64013 / CIP 107961 / Muc).